The sequence spans 375 residues: Transcription factor E2F4 (375 aa).

The DNA-binding element occupies 12–81; sequence SRHEKSLGLL…KNSIQWKGVG (70 aa). The tract at residues 39–61 is leucine-zipper; the sequence is LKAAADTLAVRQKRRIYDITNVL. A DEF box motif is present at residues 44–81; sequence DTLAVRQKRRIYDITNVLEGIGLIEKKSKNSIQWKGVG. Positions 82-177 are dimerization; sequence PGCNTREIAD…NTNGQKKFQI (96 aa). The interval 197–300 is disordered; the sequence is SSAPVVVPVP…PDPSTSFQPI (104 aa). A compositionally biased stretch (polar residues) spans 220 to 270; that stretch reads STPQRPALTPQNDIATSPAPTVPHSTISNAESQDCPTGQTFSMENTTSSRL. Residues 280 to 296 are compositionally biased toward low complexity; it reads SSASLDNSNDSPDPSTS. The transactivation stretch occupies residues 299–375; that stretch reads PIKSDLSDVL…CDLFDVPINL (77 aa).

It belongs to the E2F/DP family. As to quaternary structure, component of the drtf1/e2f transcription factor complex. Component of the EDM complex, at least composed of e2f4, e2f5, mcidas and tfdp1.

It is found in the nucleus. Functionally, transcription activator that binds DNA cooperatively with DP proteins through the E2 recognition site, 5'-TTTC[CG]CGC-3' found in the promoter region of a number of genes. Component of the EDM complex, a complex specifically required for multiciliate cell differentiation: the EDM complex binds and activate genes required for centriole biogenesis. Activates genes required for centriole assembly (plk4, cep152) and genes specifically required for motile cilia formation (foxj1). Also promotes the deuterosome pathway of centriole biogenesis by activating expression of deup1, but not its paralog cep63. The polypeptide is Transcription factor E2F4 (Xenopus laevis (African clawed frog)).